We begin with the raw amino-acid sequence, 445 residues long: Tubulin beta chain (445 aa).

The short motif at Met1–Ile4 is the MREI motif element. A GTP-binding site is contributed by Gln11. Ser40 is modified (phosphoserine). Residue Lys58 is modified to N6-acetyllysine; alternate. Lys58 is modified (N6-succinyllysine; alternate). A Glycyl lysine isopeptide (Lys-Gly) (interchain with G-Cter in ubiquitin); alternate cross-link involves residue Lys58. Positions 69, 138, 142, 143, and 144 each coordinate GTP. Residue Glu69 coordinates Mg(2+). A Phosphoserine; by CDK1 modification is found at Ser172. Asn204 and Asn226 together coordinate GTP. 2 positions are modified to phosphothreonine: Thr285 and Thr290. Position 318 is an omega-N-methylarginine (Arg318). Residue Lys324 forms a Glycyl lysine isopeptide (Lys-Gly) (interchain with G-Cter in ubiquitin) linkage. The interval Gln424–Ala445 is disordered. The span at Thr429 to Ala445 shows a compositional bias: acidic residues. Glu438 is subject to 5-glutamyl polyglutamate.

Belongs to the tubulin family. Dimer of alpha and beta chains. A typical microtubule is a hollow water-filled tube with an outer diameter of 25 nm and an inner diameter of 15 nM. Alpha-beta heterodimers associate head-to-tail to form protofilaments running lengthwise along the microtubule wall with the beta-tubulin subunit facing the microtubule plus end conferring a structural polarity. Microtubules usually have 13 protofilaments but different protofilament numbers can be found in some organisms and specialized cells. Interacts with NCKAP5L. It depends on Mg(2+) as a cofactor. Post-translationally, some glutamate residues at the C-terminus are polyglycylated, resulting in polyglycine chains on the gamma-carboxyl group. Glycylation is mainly limited to tubulin incorporated into axonemes (cilia and flagella) whereas glutamylation is prevalent in neuronal cells, centrioles, axonemes, and the mitotic spindle. Both modifications can coexist on the same protein on adjacent residues, and lowering polyglycylation levels increases polyglutamylation, and reciprocally. Cilia and flagella glycylation is required for their stability and maintenance. Flagella glycylation controls sperm motility. Some glutamate residues at the C-terminus are polyglutamylated, resulting in polyglutamate chains on the gamma-carboxyl group. Polyglutamylation plays a key role in microtubule severing by spastin (SPAST). SPAST preferentially recognizes and acts on microtubules decorated with short polyglutamate tails: severing activity by SPAST increases as the number of glutamates per tubulin rises from one to eight, but decreases beyond this glutamylation threshold. In terms of processing, phosphorylated on Ser-172 by CDK1 during the cell cycle, from metaphase to telophase, but not in interphase. This phosphorylation inhibits tubulin incorporation into microtubules.

It localises to the cytoplasm. The protein localises to the cytoskeleton. Its function is as follows. Tubulin is the major constituent of microtubules, a cylinder consisting of laterally associated linear protofilaments composed of alpha- and beta-tubulin heterodimers. Microtubules grow by the addition of GTP-tubulin dimers to the microtubule end, where a stabilizing cap forms. Below the cap, tubulin dimers are in GDP-bound state, owing to GTPase activity of alpha-tubulin. The protein is Tubulin beta chain of Sus scrofa (Pig).